Consider the following 214-residue polypeptide: Large ribosomal subunit protein bL25 (214 aa).

The interval 194-214 (TTEAEETAEPEVIRRKEEEEE) is disordered. Over residues 204 to 214 (EVIRRKEEEEE) the composition is skewed to basic and acidic residues.

Belongs to the bacterial ribosomal protein bL25 family. CTC subfamily. In terms of assembly, part of the 50S ribosomal subunit; part of the 5S rRNA/L5/L18/L25 subcomplex. Contacts the 5S rRNA. Binds to the 5S rRNA independently of L5 and L18.

Its function is as follows. This is one of the proteins that binds to the 5S RNA in the ribosome where it forms part of the central protuberance. The polypeptide is Large ribosomal subunit protein bL25 (Thermotoga petrophila (strain ATCC BAA-488 / DSM 13995 / JCM 10881 / RKU-1)).